Here is a 105-residue protein sequence, read N- to C-terminus: Putative regulatory protein COPRO5265_1186 (105 aa).

The disordered stretch occupies residues 76–105 (RLEEEEEEEERTEPITEQEAELEEESGEDV). Positions 78 to 105 (EEEEEEEERTEPITEQEAELEEESGEDV) are enriched in acidic residues.

This sequence belongs to the RemA family.

The chain is Putative regulatory protein COPRO5265_1186 from Coprothermobacter proteolyticus (strain ATCC 35245 / DSM 5265 / OCM 4 / BT).